We begin with the raw amino-acid sequence, 247 residues long: Adenosylcobinamide-GDP ribazoletransferase (247 aa).

5 helical membrane passes run 34–54 (IITF…VFMV), 57–77 (AWCG…LMTG), 113–133 (GGLA…ELAL), 138–158 (ILAS…LLMY), and 194–214 (VLLL…AIFI).

Belongs to the CobS family. Requires Mg(2+) as cofactor.

The protein resides in the cell inner membrane. It catalyses the reaction alpha-ribazole + adenosylcob(III)inamide-GDP = adenosylcob(III)alamin + GMP + H(+). It carries out the reaction alpha-ribazole 5'-phosphate + adenosylcob(III)inamide-GDP = adenosylcob(III)alamin 5'-phosphate + GMP + H(+). It functions in the pathway cofactor biosynthesis; adenosylcobalamin biosynthesis; adenosylcobalamin from cob(II)yrinate a,c-diamide: step 7/7. Functionally, joins adenosylcobinamide-GDP and alpha-ribazole to generate adenosylcobalamin (Ado-cobalamin). Also synthesizes adenosylcobalamin 5'-phosphate from adenosylcobinamide-GDP and alpha-ribazole 5'-phosphate. The sequence is that of Adenosylcobinamide-GDP ribazoletransferase from Shigella flexneri.